Reading from the N-terminus, the 419-residue chain is G-protein coupled receptor 151 (419 aa).

Topologically, residues 1–41 are extracellular; it reads MLAAAFADSNSSSMNVSFAHLHFAGGYLPSDSQDWRTIIPA. Residues Asn-10 and Asn-15 are each glycosylated (N-linked (GlcNAc...) asparagine). Residues 42 to 62 form a helical membrane-spanning segment; it reads LLVAVCLVGFVGNLCVIGILL. At 63–71 the chain is on the cytoplasmic side; sequence HNAWKGKPS. A helical membrane pass occupies residues 72 to 92; that stretch reads MIHSLILNLSLADLSLLLFSA. The Extracellular segment spans residues 93–116; sequence PIRATAYSKSVWDLGWFVCKSSDW. A disulfide bond links Cys-111 and Cys-187. Residues 117 to 137 traverse the membrane as a helical segment; sequence FIHTCMAAKSLTIVVVAKVCF. Residues 138–153 lie on the Cytoplasmic side of the membrane; sequence MYASDPAKQVSIHNYT. The helical transmembrane segment at 154–174 threads the bilayer; sequence IWSVLVAIWTVASLLPLPEWF. Residues 175 to 201 lie on the Extracellular side of the membrane; sequence FSTIRHHEGVEMCLVDVPAVAEEFMSM. Residues 202–222 form a helical membrane-spanning segment; the sequence is FGKLYPLLAFGLPLFFASFYF. Topologically, residues 223-252 are cytoplasmic; it reads WRAYDQCKKRGTKTQNLRNQIRSKQVTVML. The chain crosses the membrane as a helical span at residues 253-273; sequence LSIAIISALLWLPEWVAWLWV. Residues 274 to 286 are Extracellular-facing; that stretch reads WHLKAAGPAPPQG. Residues 287 to 307 form a helical membrane-spanning segment; it reads FIALSQVLMFSISSANPLIFL. The Cytoplasmic portion of the chain corresponds to 308-419; it reads VMSEEFREGL…EDQETGEGVK (112 aa). The tract at residues 330–419 is disordered; that stretch reads PTVSESQETP…EDQETGEGVK (90 aa). Residues 332–341 show a composition bias toward polar residues; the sequence is VSESQETPAG. Positions 410-419 are enriched in acidic residues; that stretch reads EDQETGEGVK.

Belongs to the G-protein coupled receptor 1 family. As to expression, high expression in the spinal cord.

The protein resides in the cell membrane. Proton-sensing G-protein coupled receptor. The sequence is that of G-protein coupled receptor 151 (GPR151) from Homo sapiens (Human).